We begin with the raw amino-acid sequence, 265 residues long: Undecaprenyl-diphosphatase (265 aa).

7 consecutive transmembrane segments (helical) span residues 41–61 (IAYT…LIYF), 75–95 (LKFL…LYVI), 104–124 (YNPS…GIYI), 137–157 (LSTK…LPGV), 180–200 (YSYL…LLFT), 215–235 (GIAL…GFLL), and 244–264 (YLID…GLII).

This sequence belongs to the UppP family.

The protein localises to the cell membrane. It carries out the reaction di-trans,octa-cis-undecaprenyl diphosphate + H2O = di-trans,octa-cis-undecaprenyl phosphate + phosphate + H(+). Its function is as follows. Catalyzes the dephosphorylation of undecaprenyl diphosphate (UPP). The polypeptide is Undecaprenyl-diphosphatase (Saccharolobus islandicus (strain Y.G.57.14 / Yellowstone #1) (Sulfolobus islandicus)).